Consider the following 200-residue polypeptide: Casparian strip membrane protein 2 (200 aa).

At 1-37 the chain is on the cytoplasmic side; that stretch reads MMKSDSVAIDVPESSSVAKRKAPFMANIRDENGGYKK. Residues 38-58 traverse the membrane as a helical segment; the sequence is GLAIFDFILRLGAIAAALGAA. The Extracellular portion of the chain corresponds to 59 to 88; the sequence is STMGTSDETLPFFTQFFQFNAGYDDFPTFQ. The chain crosses the membrane as a helical span at residues 89-109; the sequence is FFVIAMAMVAGYLVLSLPFSI. The Cytoplasmic portion of the chain corresponds to 110-121; that stretch reads VSICRPHAAGPR. A helical membrane pass occupies residues 122–142; sequence ILLFILDTVALTLNAAAGAAA. Topologically, residues 143 to 175 are extracellular; sequence ADIVYLAHNGNQTTNWLAICLQFGDFCREVSGS. A glycan (N-linked (GlcNAc...) asparagine) is linked at asparagine 153. Residues 176-196 form a helical membrane-spanning segment; sequence VVASFASVVILMVLVVMSGLA. Over 197-200 the chain is Cytoplasmic; it reads LRRY.

This sequence belongs to the Casparian strip membrane proteins (CASP) family. As to quaternary structure, homodimer and heterodimers.

The protein localises to the cell membrane. Its function is as follows. Regulates membrane-cell wall junctions and localized cell wall deposition. Required for establishment of the Casparian strip membrane domain (CSD) and the subsequent formation of Casparian strips, a cell wall modification of the root endodermis that determines an apoplastic barrier between the intraorganismal apoplasm and the extraorganismal apoplasm and prevents lateral diffusion. In Ricinus communis (Castor bean), this protein is Casparian strip membrane protein 2.